A 159-amino-acid polypeptide reads, in one-letter code: Style cell-cycle inhibitor 1 (159 aa).

The disordered stretch occupies residues 1 to 86 (MVSERSSKEK…SDHKLKEGIP (86 aa)). Positions 15–50 (ARSEDSSSSDYEEKVKRHRGTEKDDERRSRRSDKKD) are enriched in basic and acidic residues. Basic residues predominate over residues 51–63 (KKSHKHHKSSTSK). The segment covering 64–85 (KSKDDKPKKKHTESDHKLKEGI) has biased composition (basic and acidic residues).

The protein localises to the nucleus. Functionally, component of the auxin signaling transduction pathway that regulates cell proliferation and differentiation during flowers stigmas and styles development. Involved in the regulation of auxin-related genes. The chain is Style cell-cycle inhibitor 1 from Arabidopsis thaliana (Mouse-ear cress).